Here is an 80-residue protein sequence, read N- to C-terminus: OMEGA-myrmeciitoxin(02)-Mg1a (80 aa).

The signal sequence occupies residues 1 to 30 (MKNNYISTCIVYLMAALLLISVISIKECTA). Residues 35–75 (YGDPCSDDLKDYCIHGDCFFLKELNQPACRCYTGYYGSRCE) form the EGF-like domain. Cystine bridges form between cysteine 39–cysteine 52, cysteine 47–cysteine 63, and cysteine 65–cysteine 74.

It belongs to the EGF domain peptide family. In terms of tissue distribution, expressed by the venom gland.

It localises to the secreted. Ant peptide with probable defensive activity which acts as a potent agonist of the mammalian epidermal growth factor receptor (EGFR) (EC(50)=6.3 nM). Mimics, both structurally and functionally, vertebrate epidermal growth factor (EGF) peptide hormones. In vivo, intraplantar injection in mice causes long-lasting (several days) hypersensitivity of the injected paw to both mechanical and thermal stimuli. Its long-lasting effect is unusual for venom toxins whose effects are usually immediate. One possible explanation is that it would reduce the duration of a nest attack, discourage future attacks, or enhance the actions of subsequent exposure to other pain-inducing venom peptides. The chain is OMEGA-myrmeciitoxin(02)-Mg1a from Myrmecia gulosa (Red bulldog ant).